A 212-amino-acid polypeptide reads, in one-letter code: LNYQLSPSFEYQSDPWFTHVWKGVNGTPTKKRAIGFKKLAKAVKFSTKLMGQAMAKRVKATILYATETGKSQVYAKTLCEIFKHAFDAKVMSMDEYDIVHLEHEALVLVVTSTFGNGDPPENGEKFGSALMEIRHPSSNSAERKSYKVRFNSVSSYSDSRKSSSDEPEHKDNFESTGPLANVRFSAFGLGSRAYPHFCAFARAVDTLLEELG.

Tyr11 contacts heme b. Residues 30–50 are calmodulin-binding; it reads KKRAIGFKKLAKAVKFSTKLM. Positions 60 to 212 constitute a Flavodoxin-like domain; the sequence is ATILYATETG…AVDTLLEELG (153 aa). Residues 155-175 are disordered; it reads SYSDSRKSSSDEPEHKDNFES. Over residues 158–173 the composition is skewed to basic and acidic residues; it reads DSRKSSSDEPEHKDNF. 186–212 contacts FMN; it reads AFGLGSRAYPHFCAFARAVDTLLEELG.

Belongs to the NOS family. Heme b is required as a cofactor. It depends on FAD as a cofactor. Requires FMN as cofactor.

The catalysed reaction is 2 L-arginine + 3 NADPH + 4 O2 + H(+) = 2 L-citrulline + 2 nitric oxide + 3 NADP(+) + 4 H2O. Its function is as follows. Produces nitric oxide (NO) which is a messenger molecule with diverse functions throughout the body. The protein is Nitric oxide synthase of Squalus acanthias (Spiny dogfish).